We begin with the raw amino-acid sequence, 395 residues long: MHRITILGATGSIGESTLDVVRRHADRYAVHALTAHRQVQKLAASCIEFRPARAVVGTSEAAAELEALLRMAGVKTEVSHGEAALESVASDAQTDSVMAAIVGAAGLRPTLAAARAGKRVLLANKEALVMSGRIFMDAVREHGATLLPIDSEHNAIFQCLPANDQRYRAGVAKVVLTASGGPFRTRDPATLHDITPDQACAHPNWVMGRKISVDSATMMNKGLEVIEAHWLFGAPAEHIEVLIHPQSIVHSMVAYRDGSVLAQLGNPDMRTPIAYGLAYPERIDAGVSPLDLTLAGALNFEKPDLVRFPCLALAFDALRAGGVAPAVLNAANEVAVEAFLQGGIRFTDIARIVGNVLEKAPHGAADSLECVLEADQLARQSARACLQDVTTSAVR.

Residues Thr10, Gly11, Ser12, Ile13, Arg37, Gln38, and Asn124 each coordinate NADPH. Residue Lys125 participates in 1-deoxy-D-xylulose 5-phosphate binding. An NADPH-binding site is contributed by Glu126. Asp150 is a binding site for Mn(2+). 4 residues coordinate 1-deoxy-D-xylulose 5-phosphate: Ser151, Glu152, Ser179, and His202. A Mn(2+)-binding site is contributed by Glu152. Gly208 is a binding site for NADPH. 1-deoxy-D-xylulose 5-phosphate-binding residues include Ser215, Asn220, Lys221, and Glu224. Glu224 is a Mn(2+) binding site.

Belongs to the DXR family. Mg(2+) serves as cofactor. Requires Mn(2+) as cofactor.

It catalyses the reaction 2-C-methyl-D-erythritol 4-phosphate + NADP(+) = 1-deoxy-D-xylulose 5-phosphate + NADPH + H(+). The protein operates within isoprenoid biosynthesis; isopentenyl diphosphate biosynthesis via DXP pathway; isopentenyl diphosphate from 1-deoxy-D-xylulose 5-phosphate: step 1/6. Catalyzes the NADPH-dependent rearrangement and reduction of 1-deoxy-D-xylulose-5-phosphate (DXP) to 2-C-methyl-D-erythritol 4-phosphate (MEP). The polypeptide is 1-deoxy-D-xylulose 5-phosphate reductoisomerase (Cupriavidus pinatubonensis (strain JMP 134 / LMG 1197) (Cupriavidus necator (strain JMP 134))).